A 761-amino-acid polypeptide reads, in one-letter code: Copper-exporting P-type ATPase (761 aa).

Threonine 2 is modified (N-acetylthreonine). One can recognise an HMA domain in the interval 14–78 (QRIQLRISGM…AVRRAGYQAD (65 aa)). Residues cysteine 25 and cysteine 28 each coordinate Cu(+). 6 consecutive transmembrane segments (helical) span residues 102–122 (LAIA…FGVV), 129–149 (GWQW…AWPF), 164–184 (METL…YTVF), 199–219 (LLGS…FVLV), 361–381 (VFVP…LIAG), and 387–407 (AVSA…GLAT). The 4-aspartylphosphate intermediate role is filled by aspartate 443. Transmembrane regions (helical) follow at residues 695 to 714 (MVWA…AGLL) and 718 to 735 (VAGA…SNSL).

This sequence belongs to the cation transport ATPase (P-type) (TC 3.A.3) family. Type IB subfamily.

The protein localises to the cell membrane. It catalyses the reaction Cu(+)(in) + ATP + H2O = Cu(+)(out) + ADP + phosphate + H(+). With respect to regulation, ATPase activity is stimulated by Cu(+) ions. Its function is as follows. Involved in copper export. Could be involved in the copper detoxification of mycobacterial cells. The sequence is that of Copper-exporting P-type ATPase (ctpA) from Mycobacterium tuberculosis (strain ATCC 25618 / H37Rv).